The chain runs to 297 residues: 4-hydroxy-tetrahydrodipicolinate synthase (297 aa).

A pyruvate-binding site is contributed by Thr47. The Proton donor/acceptor role is filled by Tyr135. Lys163 (schiff-base intermediate with substrate) is an active-site residue. Ile205 is a binding site for pyruvate.

This sequence belongs to the DapA family. In terms of assembly, homotetramer; dimer of dimers.

Its subcellular location is the cytoplasm. The enzyme catalyses L-aspartate 4-semialdehyde + pyruvate = (2S,4S)-4-hydroxy-2,3,4,5-tetrahydrodipicolinate + H2O + H(+). Its pathway is amino-acid biosynthesis; L-lysine biosynthesis via DAP pathway; (S)-tetrahydrodipicolinate from L-aspartate: step 3/4. Functionally, catalyzes the condensation of (S)-aspartate-beta-semialdehyde [(S)-ASA] and pyruvate to 4-hydroxy-tetrahydrodipicolinate (HTPA). The sequence is that of 4-hydroxy-tetrahydrodipicolinate synthase from Dehalococcoides mccartyi (strain ATCC BAA-2266 / KCTC 15142 / 195) (Dehalococcoides ethenogenes (strain 195)).